Here is a 156-residue protein sequence, read N- to C-terminus: Small ribosomal subunit protein uS7 (156 aa).

Belongs to the universal ribosomal protein uS7 family. Part of the 30S ribosomal subunit. Contacts proteins S9 and S11.

In terms of biological role, one of the primary rRNA binding proteins, it binds directly to 16S rRNA where it nucleates assembly of the head domain of the 30S subunit. Is located at the subunit interface close to the decoding center, probably blocks exit of the E-site tRNA. In Clostridioides difficile (strain 630) (Peptoclostridium difficile), this protein is Small ribosomal subunit protein uS7.